A 132-amino-acid chain; its full sequence is Small ribosomal subunit protein uS8 (132 aa).

It belongs to the universal ribosomal protein uS8 family. As to quaternary structure, part of the 30S ribosomal subunit. Contacts proteins S5 and S12.

Its function is as follows. One of the primary rRNA binding proteins, it binds directly to 16S rRNA central domain where it helps coordinate assembly of the platform of the 30S subunit. This is Small ribosomal subunit protein uS8 from Treponema pallidum (strain Nichols).